The primary structure comprises 296 residues: Formamidopyrimidine-DNA glycosylase (296 aa).

Residue Pro-2 is the Schiff-base intermediate with DNA of the active site. Glu-3 serves as the catalytic Proton donor. Lys-61 functions as the Proton donor; for beta-elimination activity in the catalytic mechanism. Residues His-104, Arg-123, and Lys-169 each contribute to the DNA site. The FPG-type zinc-finger motif lies at 255–289 (DAYGREGEPCRRCGAIMRRDKFMNRSSFYCPRCQP). Arg-279 serves as the catalytic Proton donor; for delta-elimination activity.

Belongs to the FPG family. Monomer. The cofactor is Zn(2+).

The enzyme catalyses Hydrolysis of DNA containing ring-opened 7-methylguanine residues, releasing 2,6-diamino-4-hydroxy-5-(N-methyl)formamidopyrimidine.. The catalysed reaction is 2'-deoxyribonucleotide-(2'-deoxyribose 5'-phosphate)-2'-deoxyribonucleotide-DNA = a 3'-end 2'-deoxyribonucleotide-(2,3-dehydro-2,3-deoxyribose 5'-phosphate)-DNA + a 5'-end 5'-phospho-2'-deoxyribonucleoside-DNA + H(+). Involved in base excision repair of DNA damaged by oxidation or by mutagenic agents. Acts as a DNA glycosylase that recognizes and removes damaged bases. Has a preference for oxidized purines, such as 7,8-dihydro-8-oxoguanine (8-oxoG). Has AP (apurinic/apyrimidinic) lyase activity and introduces nicks in the DNA strand. Cleaves the DNA backbone by beta-delta elimination to generate a single-strand break at the site of the removed base with both 3'- and 5'-phosphates. The sequence is that of Formamidopyrimidine-DNA glycosylase from Mycobacterium sp. (strain KMS).